The primary structure comprises 148 residues: MNQQMVLKIGGVVVDPQPVKVESKYTGELEVTRKKVVHRMLDIIIPVGLATKLTMALSPGALAAAGVDSADKIRRGFHDIIDVFTALAEPILWFYALTACVLIATKNKNAGWERLKNVGYAYAGIALLPTFFSFLRWVSSIVSSSITF.

This is an uncharacterized protein from Bacillus subtilis (Bacteriophage SP01).